We begin with the raw amino-acid sequence, 486 residues long: Heme A synthase COX15 (486 aa).

The transit peptide at 1 to 33 (MLFRNIEVGRQAAKLLTRTSSRLAWQSIGASRN) directs the protein to the mitochondrion. Over 34–85 (ISTIRQQIRKTQLYNFKKTVSIRPFSLSSPVFKPHVASESNPIESRLKTSKN) the chain is Mitochondrial matrix. The helical transmembrane segment at 86–106 (VAYWLIGTSGLVFGIVVLGGL) threads the bilayer. Topologically, residues 107–170 (TRLTESGLSI…FIFFMEWIHR (64 aa)) are mitochondrial intermembrane. H169 provides a ligand contact to heme o. Residues 171–191 (LWGRAIGAVFILPAVYFAVSK) form a helical membrane-spanning segment. Topologically, residues 192–200 (KTSGHVNKR) are mitochondrial matrix. Residues 201 to 221 (LFGLAGLLGLQGFVGWWMVKS) form a helical membrane-spanning segment. At 222–243 (GLDQEQLDARKSKPTVSQYRLT) the chain is on the mitochondrial intermembrane side. A helical transmembrane segment spans residues 244–264 (THLGTAFFLYMGMLWTGLEIL). H245 contacts heme o. Residues 265 to 293 (RECKWIKNPVQAISLFKKLDNPAIGPMRK) lie on the Mitochondrial matrix side of the membrane. The chain crosses the membrane as a helical span at residues 294-314 (ISLALLAVSFLTAMSGGMVAG). At 315 to 364 (LDAGWVYNTWPKMGERWFPSSRELMDENFCRREDKKDLWWRNLLENPVTV) the chain is on the mitochondrial intermembrane side. The helical transmembrane segment at 365-387 (QLVHRTCAYVAFTSVLAAHMYAI) threads the bilayer. Heme b is bound at residue H368. Over 388 to 402 (KKKAVIPRNAMTSLH) the chain is Mitochondrial matrix. Residues 403–423 (VMMGVVTLQATLGILTILYLV) traverse the membrane as a helical segment. Position 424 (P424) is a topological domain, mitochondrial intermembrane. Residues 425 to 445 (ISLASIHQAGALALLTSSLVF) form a helical membrane-spanning segment. H431 serves as a coordination point for heme b. Residues 446 to 486 (ASQLRKPRAPMRNVIITLPHSSKVTSGKILSEASKLASKPL) lie on the Mitochondrial matrix side of the membrane.

Belongs to the COX15/CtaA family. Type 2 subfamily. As to quaternary structure, forms 200-350 kDa oligomeric complexes independent on heme binding. In addition to form homooligomeric complexes, a portion also associates with the mitochondrial respiratory supercomplexes. Interacts with CcO assembly factors PET117, SHY1, COA3 and COA1, CcO subunit COX13 and cytochrome b-c1 subunit COR1. The cofactor is heme b.

The protein resides in the mitochondrion inner membrane. The enzyme catalyses Fe(II)-heme o + 2 A + H2O = Fe(II)-heme a + 2 AH2. The protein operates within porphyrin-containing compound metabolism; heme A biosynthesis; heme A from heme O: step 1/1. Functionally, catalyzes the second reaction in the biosynthesis of heme A, a prosthetic group of mitochondrial cytochrome c oxidase (CcO). Heme A is synthesized from heme B by two sequential enzymatic reactions catalyzed by heme O synthase (HOS/COX10) and heme A synthase (HAS/COX15). HAS catalyzes the conversion of heme O to heme A by two successive hydroxylations of the methyl group at C8, in a reaction that involves matrix ferredoxin YAH1 and ferredoxin reductase ARH1. The first hydroxylation forms heme I, the second hydroxylation results in an unstable dihydroxymethyl group, which spontaneously dehydrates, resulting in the formyl group of heme A. May also play a secondary role in CcO assembly. Plays a role in the maturation of COX1, the heme A-containing structural CcO subunit, possibly by interacting with the COX1-containing sub-assembly complexes that form prior to heme A insertion. May also positively regulate the upstream enzymatic reaction, farnesylation of heme B by HOS/COX10. The polypeptide is Heme A synthase COX15 (Saccharomyces cerevisiae (strain ATCC 204508 / S288c) (Baker's yeast)).